The primary structure comprises 334 residues: DNA-directed RNA polymerase subunit alpha (334 aa).

The alpha N-terminal domain (alpha-NTD) stretch occupies residues 1 to 231 (MNMIKIEPYI…KQMSIFGVDL (231 aa)). The alpha C-terminal domain (alpha-CTD) stretch occupies residues 247 to 334 (ELKTLMIKID…NRKLAKLKSN (88 aa)).

The protein belongs to the RNA polymerase alpha chain family. Homodimer. The RNAP catalytic core consists of 2 alpha, 1 beta/beta' and 1 omega subunit. When a sigma factor is associated with the core the holoenzyme is formed, which can initiate transcription.

It catalyses the reaction RNA(n) + a ribonucleoside 5'-triphosphate = RNA(n+1) + diphosphate. In terms of biological role, DNA-dependent RNA polymerase catalyzes the transcription of DNA into RNA using the four ribonucleoside triphosphates as substrates. In Helicobacter hepaticus (strain ATCC 51449 / 3B1), this protein is DNA-directed RNA polymerase subunit alpha.